A 316-amino-acid polypeptide reads, in one-letter code: Olfactory receptor 4N4C (316 aa).

Topologically, residues 1-26 (MKIANNTVVTEFILLGLTQSQDIQLL) are cytoplasmic. Residues 27-47 (VFVLILIFYLIILPGNFLIIF) form a helical membrane-spanning segment. At 48-56 (TIRSDPGLT) the chain is on the extracellular side. Residues 57–77 (APLYLFLGNLAFLDASYSFIV) traverse the membrane as a helical segment. The Cytoplasmic portion of the chain corresponds to 78-99 (APRMLVDFLSEKKVISYRGCIT). A disulfide bridge links C97 with C179. A helical transmembrane segment spans residues 100–120 (QLFFLHFLGGGEGLLLVVMAF). Over 121-143 (DRYIAICRPLHCSTVMNPRACYA) the chain is Extracellular. Residues 144-164 (MMLALWLGGFVHSIIQVVLIL) traverse the membrane as a helical segment. At 165–204 (RLPFCGPNQLDNFFCDVRQVIKLACTDMFVVELLMVFNSG) the chain is on the cytoplasmic side. A helical transmembrane segment spans residues 205-225 (LMTLLCFLGLLASYAVILCHV). Over 226-243 (RRAASEGKNKAMSTCTTR) the chain is Extracellular. Residues 244–264 (VIIILLMFGPAIFIYICPFRA) traverse the membrane as a helical segment. Over 265 to 268 (LPAD) the chain is Cytoplasmic. The chain crosses the membrane as a helical span at residues 269 to 289 (KMVSLFHTVIFPLMNPMIYTL). The Extracellular segment spans residues 290–316 (RNQEVKTSMKRLLSRHVVCQVDFIIRN).

The protein belongs to the G-protein coupled receptor 1 family.

Its subcellular location is the membrane. Its function is as follows. Odorant receptor. This chain is Olfactory receptor 4N4C, found in Homo sapiens (Human).